Consider the following 662-residue polypeptide: Methyl-accepting chemotaxis protein TlpA (662 aa).

Residues 1-16 lie on the Cytoplasmic side of the membrane; that stretch reads MKKTLTTIRRSSIARR. A helical membrane pass occupies residues 17–37; it reads LIISFLLILIVPITALSVSAY. The Extracellular portion of the chain corresponds to 38 to 281; it reads QSAVASLDVQ…IHDAASRVLI (244 aa). The region spanning 152-228 is the Cache domain; sequence VTEPYESISS…KAGTELKGDW (77 aa). Residues 282-302 traverse the membrane as a helical segment; that stretch reads MASIVLAIAIGAGMTAIYFVI. The HAMP domain maps to 303–355; the sequence is RSITKPLRRIVASAEKISEGDLTETIEINSKDELGVLSESFNHMAHSLRSLIH. At 303-662 the chain is on the cytoplasmic side; the sequence is RSITKPLRRI…DLTKQFKVDK (360 aa). 4 positions are modified to glutamate methyl ester (Glu): Glu-370, Glu-594, Glu-629, and Glu-636. The Methyl-accepting transducer domain occupies 374–610; sequence SADQTSRATE…EISAASNDIT (237 aa).

It belongs to the methyl-accepting chemotaxis (MCP) protein family. Interacts with YabA.

Its subcellular location is the cell membrane. Functionally, chemotactic-signal transducers respond to changes in the concentration of attractants and repellents in the environment, transduce a signal from the outside to the inside of the cell, and facilitate sensory adaptation through the variation of the level of methylation. All amino acids serve as attractants in B.subtilis, they appear to cause an increase in the turnover methyl groups, leading to methylation of an unidentified acceptor, while repellents have been shown to cause a decrease in methyl group turnover. The methyl groups are added by a methyltransferase and removed by a methylesterase. The chain is Methyl-accepting chemotaxis protein TlpA from Bacillus subtilis (strain 168).